The following is a 56-amino-acid chain: Large ribosomal subunit protein bL32 (56 aa).

The tract at residues 1–37 is disordered; that stretch reads MAVQQNKKSRSKRGMRRSHDALSTAQLSVDATSGELH. Over residues 7–16 the composition is skewed to basic residues; it reads KKSRSKRGMR. Over residues 21-31 the composition is skewed to polar residues; the sequence is ALSTAQLSVDA.

It belongs to the bacterial ribosomal protein bL32 family.

This chain is Large ribosomal subunit protein bL32, found in Shewanella loihica (strain ATCC BAA-1088 / PV-4).